The primary structure comprises 103 residues: Large ribosomal subunit protein bL21 (103 aa).

The protein belongs to the bacterial ribosomal protein bL21 family. As to quaternary structure, part of the 50S ribosomal subunit. Contacts protein L20.

Functionally, this protein binds to 23S rRNA in the presence of protein L20. The polypeptide is Large ribosomal subunit protein bL21 (Thioalkalivibrio sulfidiphilus (strain HL-EbGR7)).